Reading from the N-terminus, the 321-residue chain is Zinc finger protein 524 (321 aa).

Composition is skewed to polar residues over residues 1-14 (MDNPSSDPLPSTLS) and 39-48 (ATTSNRTLKS). 2 disordered regions span residues 1 to 80 (MDNP…DLLL) and 86 to 105 (VPYTVPEGSAADGPQGSGSK). Positions 49–59 (SLPRKRGRPPR) form a DNA-binding region, a.T hook. C2H2-type zinc fingers lie at residues 109–131 (HFCPVCLRAFPYLSDLERHSISH), 137–159 (HVCKDCGKTFKRSSHLRRHCNIH), 165–187 (FRCVLCPRRFREAGELAHHHRIH), and 193–216 (YQCPSCRVRFTEANTLRRHYKRKH). The interval 248-321 (GVQEESPEGK…PGAIGHPPVD (74 aa)) is disordered. Polar residues predominate over residues 262–271 (PISSTTSPLS). Residues 274–285 (TAGGSAGAGRGQ) show a composition bias toward gly residues.

The protein belongs to the krueppel C2H2-type zinc-finger protein family.

The protein resides in the nucleus. Its function is as follows. May be involved in transcriptional regulation. This Mus musculus (Mouse) protein is Zinc finger protein 524 (Znf524).